The sequence spans 183 residues: Bifunctional protein PyrR (183 aa).

The PRPP-binding signature appears at 98–110 (VVLVDDVLYTGRT).

It belongs to the purine/pyrimidine phosphoribosyltransferase family. PyrR subfamily.

It carries out the reaction UMP + diphosphate = 5-phospho-alpha-D-ribose 1-diphosphate + uracil. Regulates the transcription of the pyrimidine nucleotide (pyr) operon in response to exogenous pyrimidines. Functionally, also displays a weak uracil phosphoribosyltransferase activity which is not physiologically significant. In Roseiflexus sp. (strain RS-1), this protein is Bifunctional protein PyrR.